We begin with the raw amino-acid sequence, 328 residues long: Bifunctional phosphopantetheine adenylyltransferase/NTP phosphatase (328 aa).

A phosphopantetheine adenylyltransferase region spans residues 1–152 (MITVVGGTFS…GNGRRLKPVK (152 aa)). Residues 153-328 (VAIATNNSAK…DFYDTTYTPP (176 aa)) are inosine/xanthosine triphosphatase.

The protein in the N-terminal section; belongs to the eukaryotic CoaD family. This sequence in the C-terminal section; belongs to the YjjX NTPase family. Requires Mg(2+) as cofactor. Mn(2+) is required as a cofactor.

It localises to the cytoplasm. The enzyme catalyses (R)-4'-phosphopantetheine + ATP + H(+) = 3'-dephospho-CoA + diphosphate. The catalysed reaction is XTP + H2O = XDP + phosphate + H(+). It catalyses the reaction ITP + H2O = IDP + phosphate + H(+). It functions in the pathway cofactor biosynthesis; coenzyme A biosynthesis. Functionally, reversibly transfers an adenylyl group from ATP to 4'-phosphopantetheine, yielding dephospho-CoA (dPCoA) and pyrophosphate. Its function is as follows. Phosphatase that hydrolyzes non-canonical purine nucleotides such as XTP and ITP to their respective diphosphate derivatives. Probably excludes non-canonical purines from DNA/RNA precursor pool, thus preventing their incorporation into DNA/RNA and avoiding chromosomal lesions. This is Bifunctional phosphopantetheine adenylyltransferase/NTP phosphatase (coaD) from Thermoplasma volcanium (strain ATCC 51530 / DSM 4299 / JCM 9571 / NBRC 15438 / GSS1).